Consider the following 198-residue polypeptide: Holliday junction branch migration complex subunit RuvA (198 aa).

A domain I region spans residues 1-63 (MYDYIKGQLT…EDAHLLFGFH (63 aa)). Positions 64-142 (TEDEKDVFLK…EAPQETGNTK (79 aa)) are domain II. Residues 143 to 147 (ARSNK) are flexible linker. Positions 148 to 198 (AGNTQLDEAIEALLALGYKATELKKIRAFFEGTSETAEQYIKSALKLLMKG) are domain III.

It belongs to the RuvA family. As to quaternary structure, homotetramer. Forms an RuvA(8)-RuvB(12)-Holliday junction (HJ) complex. HJ DNA is sandwiched between 2 RuvA tetramers; dsDNA enters through RuvA and exits via RuvB. An RuvB hexamer assembles on each DNA strand where it exits the tetramer. Each RuvB hexamer is contacted by two RuvA subunits (via domain III) on 2 adjacent RuvB subunits; this complex drives branch migration. In the full resolvosome a probable DNA-RuvA(4)-RuvB(12)-RuvC(2) complex forms which resolves the HJ.

Its subcellular location is the cytoplasm. In terms of biological role, the RuvA-RuvB-RuvC complex processes Holliday junction (HJ) DNA during genetic recombination and DNA repair, while the RuvA-RuvB complex plays an important role in the rescue of blocked DNA replication forks via replication fork reversal (RFR). RuvA specifically binds to HJ cruciform DNA, conferring on it an open structure. The RuvB hexamer acts as an ATP-dependent pump, pulling dsDNA into and through the RuvAB complex. HJ branch migration allows RuvC to scan DNA until it finds its consensus sequence, where it cleaves and resolves the cruciform DNA. The protein is Holliday junction branch migration complex subunit RuvA of Streptococcus pyogenes serotype M12 (strain MGAS2096).